A 33-amino-acid polypeptide reads, in one-letter code: Photosystem II reaction center protein T (33 aa).

Residues 3-23 form a helical membrane-spanning segment; the sequence is ALVYTFLLVSTLGIIFFAIFF.

Belongs to the PsbT family. As to quaternary structure, PSII is composed of 1 copy each of membrane proteins PsbA, PsbB, PsbC, PsbD, PsbE, PsbF, PsbH, PsbI, PsbJ, PsbK, PsbL, PsbM, PsbT, PsbY, PsbZ, Psb30/Ycf12, at least 3 peripheral proteins of the oxygen-evolving complex and a large number of cofactors. It forms dimeric complexes.

It is found in the plastid. It localises to the chloroplast thylakoid membrane. Found at the monomer-monomer interface of the photosystem II (PS II) dimer, plays a role in assembly and dimerization of PSII. PSII is a light-driven water plastoquinone oxidoreductase, using light energy to abstract electrons from H(2)O, generating a proton gradient subsequently used for ATP formation. The chain is Photosystem II reaction center protein T from Asparagus officinalis (Garden asparagus).